The primary structure comprises 377 residues: tRNA(Met) cytidine acetate ligase (377 aa).

Residues 7–20 (ITEY…HLFH), Gly-100, Asn-153, and Arg-178 contribute to the ATP site.

It belongs to the TmcAL family.

The protein localises to the cytoplasm. It carries out the reaction cytidine(34) in elongator tRNA(Met) + acetate + ATP = N(4)-acetylcytidine(34) in elongator tRNA(Met) + AMP + diphosphate. In terms of biological role, catalyzes the formation of N(4)-acetylcytidine (ac(4)C) at the wobble position of elongator tRNA(Met), using acetate and ATP as substrates. First activates an acetate ion to form acetyladenylate (Ac-AMP) and then transfers the acetyl group to tRNA to form ac(4)C34. The protein is tRNA(Met) cytidine acetate ligase of Staphylococcus epidermidis (strain ATCC 12228 / FDA PCI 1200).